A 297-amino-acid chain; its full sequence is HTH-type transcriptional regulator ArgP (297 aa).

One can recognise an HTH lysR-type domain in the interval 4–60; sequence PDYRTLQALDAVIRERGFERAAQKLCITQSAVSQRIKQLENMFGQPLLVRTVPPRPT. Positions 21 to 40 form a DNA-binding region, H-T-H motif; sequence FERAAQKLCITQSAVSQRIK.

It belongs to the LysR transcriptional regulatory family. In terms of assembly, homodimer.

Functionally, controls the transcription of genes involved in arginine and lysine metabolism. The sequence is that of HTH-type transcriptional regulator ArgP from Salmonella choleraesuis (strain SC-B67).